The sequence spans 184 residues: Photosystem I assembly protein Ycf4 (184 aa).

A run of 2 helical transmembrane segments spans residues 21 to 43 (NFFW…SSSY) and 58 to 80 (VFIP…GFYL).

The protein belongs to the Ycf4 family.

The protein localises to the plastid. It is found in the chloroplast thylakoid membrane. In terms of biological role, seems to be required for the assembly of the photosystem I complex. In Psilotum nudum (Whisk fern), this protein is Photosystem I assembly protein Ycf4.